The primary structure comprises 517 residues: Ubiquitin carboxyl-terminal hydrolase 30 (517 aa).

Residues 1–35 (MLSSRAQAARTAADKALQRFLRTGAAVRYKVMKNW) are Mitochondrial intermembrane-facing. The chain crosses the membrane as a helical span at residues 36–56 (GVIGGIAAALAAGIYVIWGPI). At 57–517 (TERKKRRKGL…QQGREYRSEE (461 aa)) the chain is on the cytoplasmic side. Residues 68–502 (PGLVNLGNTC…SAYLLFYERV (435 aa)) enclose the USP domain. Cys77 (nucleophile) is an active-site residue. Residues 198 to 221 (MAPRQVTCHTRGSPHPTTNHWKSQ) form a disordered region. The span at 204–218 (TCHTRGSPHPTTNHW) shows a compositional bias: polar residues. Residues Lys235 and Lys289 each participate in a glycyl lysine isopeptide (Lys-Gly) (interchain with G-Cter in ubiquitin) cross-link. Positions 364 to 395 (SQHGPKATENPGSAPEVQDAQAAPKPGLSQPG) are disordered. His452 (proton acceptor) is an active-site residue.

It belongs to the peptidase C19 family. In terms of processing, ubiquitinated by parkin (PRKN) at Lys-235 and Lys-289, leading to its degradation.

It localises to the mitochondrion outer membrane. It carries out the reaction Thiol-dependent hydrolysis of ester, thioester, amide, peptide and isopeptide bonds formed by the C-terminal Gly of ubiquitin (a 76-residue protein attached to proteins as an intracellular targeting signal).. With respect to regulation, inhibited by the diterpenoid derivative 15-oxospiramilactone (S3). Deubiquitinating enzyme tethered to the mitochondrial outer membrane that acts as a key inhibitor of mitophagy by counteracting the action of parkin (PRKN): hydrolyzes ubiquitin attached by parkin on target proteins, such as RHOT1/MIRO1 and TOMM20, thereby blocking parkin's ability to drive mitophagy. Preferentially cleaves 'Lys-6'- and 'Lys-11'-linked polyubiquitin chains, 2 types of linkage that participate in mitophagic signaling. Does not cleave efficiently polyubiquitin phosphorylated at 'Ser-65'. Acts as negative regulator of mitochondrial fusion by mediating deubiquitination of MFN1 and MFN2. This chain is Ubiquitin carboxyl-terminal hydrolase 30 (Usp30), found in Mus musculus (Mouse).